A 757-amino-acid polypeptide reads, in one-letter code: Endonuclease MutS2 (757 aa).

321–328 contributes to the ATP binding site; the sequence is GPNMGGKT. A Smr domain is found at 681-756; the sequence is IDIRGMTVEE…GTGVTVVEVK (76 aa).

This sequence belongs to the DNA mismatch repair MutS family. MutS2 subfamily. As to quaternary structure, homodimer. Binds to stalled ribosomes, contacting rRNA.

Its function is as follows. Endonuclease that is involved in the suppression of homologous recombination and thus may have a key role in the control of bacterial genetic diversity. Functionally, acts as a ribosome collision sensor, splitting the ribosome into its 2 subunits. Detects stalled/collided 70S ribosomes which it binds and splits by an ATP-hydrolysis driven conformational change. Acts upstream of the ribosome quality control system (RQC), a ribosome-associated complex that mediates the extraction of incompletely synthesized nascent chains from stalled ribosomes and their subsequent degradation. Probably generates substrates for RQC. This chain is Endonuclease MutS2, found in Thermotoga petrophila (strain ATCC BAA-488 / DSM 13995 / JCM 10881 / RKU-1).